A 210-amino-acid chain; its full sequence is Methylthioribulose-1-phosphate dehydratase (210 aa).

Zn(2+) contacts are provided by His-94 and His-96.

Belongs to the aldolase class II family. MtnB subfamily. The cofactor is Zn(2+).

The enzyme catalyses 5-(methylsulfanyl)-D-ribulose 1-phosphate = 5-methylsulfanyl-2,3-dioxopentyl phosphate + H2O. Its pathway is amino-acid biosynthesis; L-methionine biosynthesis via salvage pathway; L-methionine from S-methyl-5-thio-alpha-D-ribose 1-phosphate: step 2/6. Functionally, catalyzes the dehydration of methylthioribulose-1-phosphate (MTRu-1-P) into 2,3-diketo-5-methylthiopentyl-1-phosphate (DK-MTP-1-P). In Yersinia enterocolitica serotype O:8 / biotype 1B (strain NCTC 13174 / 8081), this protein is Methylthioribulose-1-phosphate dehydratase.